Here is a 678-residue protein sequence, read N- to C-terminus: Auxin response factor 7 (678 aa).

Residues 128–230 constitute a DNA-binding region (TF-B3); it reads FCKTLTASDT…ELRVGVRRLM (103 aa). 2 disordered regions span residues 360 to 386 and 502 to 547; these read AVSNSQPSPQPPARNKRARPPASNSIA and GVGQ…SRQV. The PB1 domain occupies 548–641; the sequence is RSCTKVIMQG…EAKQLTPKSK (94 aa). The segment at 643-678 is disordered; that stretch reads PIIGDAIKPNPNKQSPESDMPHSDLDSTAPVTDKDC.

The protein belongs to the ARF family. In terms of assembly, homodimers and heterodimers. As to expression, expressed in roots, culms, leaves and young panicles.

It localises to the nucleus. Auxin response factors (ARFs) are transcriptional factors that bind specifically to the DNA sequence 5'-TGTCTC-3' found in the auxin-responsive promoter elements (AuxREs). This is Auxin response factor 7 (ARF7) from Oryza sativa subsp. japonica (Rice).